We begin with the raw amino-acid sequence, 435 residues long: Ribulose bisphosphate carboxylase/oxygenase activase 2, chloroplastic (435 aa).

A chloroplast-targeting transit peptide spans 1-56 (MAAAYSTVGAVNRAPLSLNGSGARASLVPSTAFFGSSLKKSAAKFPKASSGNFKIV). An ATP-binding site is contributed by 165–172 (GGKGQGKS).

The protein belongs to the RuBisCO activase family.

The protein resides in the plastid. Its subcellular location is the chloroplast stroma. Its function is as follows. Activation of RuBisCO (ribulose-1,5-bisphosphate carboxylase/oxygenase; EC 4.1.1.39) involves the ATP-dependent carboxylation of the epsilon-amino group of lysine leading to a carbamate structure. This Larrea tridentata (Creosote bush) protein is Ribulose bisphosphate carboxylase/oxygenase activase 2, chloroplastic (RCA2).